A 143-amino-acid chain; its full sequence is MTRIVVTAEIRPSEDEDKVKVAVANFFSFKSSKVEEGKYRLFVAESDTLSSLSKFHRVLREERILDAARKYLRRGIEGDRLTFMIHKQAAYVGKITFVDSENESPLGPITYTVFHRDLEAVVDWLAPRTSRGRPLWDNPMPED.

The protein belongs to the UPF0201 family.

In Metallosphaera sedula (strain ATCC 51363 / DSM 5348 / JCM 9185 / NBRC 15509 / TH2), this protein is UPF0201 protein Msed_1787.